A 188-amino-acid chain; its full sequence is Methylamine dehydrogenase light chain (188 aa).

Residues 1–57 constitute a signal peptide (tat-type signal); the sequence is MLGNFRFDDMVEKLSRRVAGQTSRRSVIGKLGTAMLGIGLVPLLPVDRRGRVSRANA. Cystine bridges form between cysteine 80–cysteine 145, cysteine 86–cysteine 118, cysteine 93–cysteine 178, cysteine 95–cysteine 143, cysteine 103–cysteine 134, and cysteine 135–cysteine 166. The residue at position 114 (tryptophan 114) is a Tryptophylquinone. The segment at residues 114–165 is a cross-link (tryptophan tryptophylquinone (Trp-Trp)); it reads WVASCYNPTDGQSYLIAYRDCCGYNVSGRCPCLNTEGELPVYRPEFANDIIW.

This sequence belongs to the aromatic amine dehydrogenase light chain family. In terms of assembly, heterotetramer of two light and two heavy chains. Tryptophan tryptophylquinone residue serves as cofactor. In terms of processing, predicted to be exported by the Tat system. The position of the signal peptide cleavage has not been experimentally proven. Post-translationally, tryptophan tryptophylquinone (TTQ) is formed by oxidation of the indole ring of a tryptophan to form tryptophylquinone followed by covalent cross-linking with another tryptophan residue.

It localises to the periplasm. The catalysed reaction is 2 oxidized [amicyanin] + methylamine + H2O = 2 reduced [amicyanin] + formaldehyde + NH4(+) + 2 H(+). The protein operates within one-carbon metabolism; methylamine degradation; formaldehyde from methylamine: step 1/1. Its function is as follows. Methylamine dehydrogenase carries out the oxidation of methylamine. Electrons are passed from methylamine dehydrogenase to amicyanin. The polypeptide is Methylamine dehydrogenase light chain (mauA) (Paracoccus denitrificans).